A 2596-amino-acid chain; its full sequence is Protein unc-79 homolog (2596 aa).

A phosphoserine mark is found at Ser754 and Ser758. Disordered stretches follow at residues 907 to 931 (GPEG…TVPS), 1539 to 1573 (SQRQ…GFQE), 1594 to 1632 (VDSP…DSDS), 1648 to 1679 (EEEE…SVLS), 1695 to 1832 (KDFS…FKIQ), and 1863 to 1909 (LGEQ…KQIQ). Over residues 1594–1606 (VDSPGKPAPREDL) the composition is skewed to basic and acidic residues. Positions 1662–1679 (GNNAASSPSIPSQPSVLS) are enriched in low complexity. Positions 1704 to 1713 (NHQSASNEDS) are enriched in polar residues. The segment covering 1726–1735 (ELSKSEELRE) has biased composition (basic and acidic residues). Residues 1897–1908 (ETSSHSSISKQI) are compositionally biased toward polar residues. Helical transmembrane passes span 2184 to 2204 (LLSF…ELCG) and 2426 to 2446 (CVLH…WTVY).

This sequence belongs to the unc-79 family. As to quaternary structure, NALCN complex consists of NALCN and auxiliary subunits, UNC79, UNC80 and NACL1. These auxiliary subunits are essential for the NALCN channel function. UNC80 bridges NALCN to UNC79. Interacts with NALCN. Interacts with UNC80.

It is found in the cell membrane. Functionally, auxiliary subunit of the NALCN sodium channel complex. The NALCN sodium channel complex is a voltage-gated ion channel responsible for the resting Na(+) permeability that controls neuronal excitability. Activated by neuropeptides substance P, neurotensin, and extracellular calcium that regulates neuronal excitability by controlling the sizes of NALCN-dependent sodium-leak current. The chain is Protein unc-79 homolog (Unc79) from Mus musculus (Mouse).